The sequence spans 351 residues: S-adenosylmethionine:tRNA ribosyltransferase-isomerase (351 aa).

It belongs to the QueA family. Monomer.

The protein resides in the cytoplasm. The catalysed reaction is 7-aminomethyl-7-carbaguanosine(34) in tRNA + S-adenosyl-L-methionine = epoxyqueuosine(34) in tRNA + adenine + L-methionine + 2 H(+). The protein operates within tRNA modification; tRNA-queuosine biosynthesis. Functionally, transfers and isomerizes the ribose moiety from AdoMet to the 7-aminomethyl group of 7-deazaguanine (preQ1-tRNA) to give epoxyqueuosine (oQ-tRNA). This chain is S-adenosylmethionine:tRNA ribosyltransferase-isomerase, found in Photobacterium profundum (strain SS9).